Here is a 279-residue protein sequence, read N- to C-terminus: Large ribosomal subunit protein uL2 (279 aa).

2 disordered regions span residues 32 to 53 and 225 to 279; these read SLLRPLPKHGGRNNAGRITTRH and AMNP…KKRK. The segment covering 253–268 has biased composition (basic and acidic residues); sequence KEGRTRHINKPSDKLI. Positions 269–279 are enriched in basic residues; it reads VRRRNAGKKRK.

This sequence belongs to the universal ribosomal protein uL2 family. Part of the 50S ribosomal subunit. Forms a bridge to the 30S subunit in the 70S ribosome.

Functionally, one of the primary rRNA binding proteins. Required for association of the 30S and 50S subunits to form the 70S ribosome, for tRNA binding and peptide bond formation. It has been suggested to have peptidyltransferase activity; this is somewhat controversial. Makes several contacts with the 16S rRNA in the 70S ribosome. The sequence is that of Large ribosomal subunit protein uL2 from Clavibacter michiganensis subsp. michiganensis (strain NCPPB 382).